Consider the following 783-residue polypeptide: Metabotropic glutamate receptor-like protein J (783 aa).

The N-terminal stretch at methionine 1–serine 20 is a signal peptide. The Extracellular portion of the chain corresponds to serine 21–valine 383. Residues aspartate 56–leucine 85 adopt a coiled-coil conformation. N-linked (GlcNAc...) asparagine glycosylation is found at asparagine 181, asparagine 196, asparagine 256, asparagine 282, and asparagine 315. Residues threonine 384–phenylalanine 404 form a helical membrane-spanning segment. Topologically, residues lysine 405–proline 415 are cytoplasmic. A helical membrane pass occupies residues alanine 416–alanine 436. Residues glutamine 437 to threonine 443 lie on the Extracellular side of the membrane. N-linked (GlcNAc...) asparagine glycosylation is present at asparagine 441. The chain crosses the membrane as a helical span at residues cysteine 444–valine 464. Residues lysine 465–tyrosine 489 lie on the Cytoplasmic side of the membrane. Residues proline 490–glycine 510 traverse the membrane as a helical segment. Over asparagine 511–glycine 538 the chain is Extracellular. Residues serine 539 to isoleucine 559 form a helical membrane-spanning segment. Residues serine 560–lysine 575 are Cytoplasmic-facing. A helical transmembrane segment spans residues proline 576 to valine 596. Residues serine 597–glutamine 604 lie on the Extracellular side of the membrane. A helical transmembrane segment spans residues threonine 605–glycine 625. The Cytoplasmic portion of the chain corresponds to serine 626–valine 783. Low complexity predominate over residues lysine 647–serine 656. 2 disordered regions span residues lysine 647 to lysine 696 and glutamine 731 to valine 783. Residues glycine 670–serine 679 show a composition bias toward acidic residues. The segment covering valine 763 to valine 783 has biased composition (polar residues).

The protein in the N-terminal section; belongs to the BMP lipoprotein family. In the C-terminal section; belongs to the G-protein coupled receptor 3 family. GABA-B receptor subfamily.

Its subcellular location is the cell membrane. The protein localises to the membrane. It localises to the endoplasmic reticulum membrane. It is found in the golgi apparatus membrane. The protein resides in the nucleus envelope. Functionally, may act during the development and be a negative regulator. The sequence is that of Metabotropic glutamate receptor-like protein J (grlJ) from Dictyostelium discoideum (Social amoeba).